The primary structure comprises 768 residues: Pentatricopeptide repeat-containing protein At4g01030, mitochondrial (768 aa).

The N-terminal 25 residues, methionine 1–valine 25, are a transit peptide targeting the mitochondrion. 16 PPR repeats span residues aspartate 22–arginine 52, aspartate 53–alanine 87, tyrosine 88–serine 122, asparagine 123–arginine 153, asparagine 154–proline 188, aspartate 189–proline 223, serine 224–asparagine 254, aspartate 259–lysine 289, asparagine 290–proline 324, aspartate 325–proline 359, asparagine 360–proline 394, asparagine 395–cysteine 429, aspartate 430–lysine 460, serine 461–proline 495, aspartate 496–arginine 526, and threonine 532–lysine 562. The type E motif stretch occupies residues isoleucine 567–aspartate 642. The segment at glutamine 643–lysine 673 is type E(+) motif. The segment at lysine 674 to tryptophan 768 is type DYW motif.

The protein belongs to the PPR family. PCMP-H subfamily.

It is found in the mitochondrion. The sequence is that of Pentatricopeptide repeat-containing protein At4g01030, mitochondrial (PCMP-H65) from Arabidopsis thaliana (Mouse-ear cress).